Consider the following 345-residue polypeptide: MPITPQEALQRTIEHREIFHDEMVELMRQIMRGEVSDMMVAAILTGLRVKKETIGEIAGAATVMREFSRRVDVADRQHMVDIVGTGGDGSHTFNISTCAMFVAAAGGAKVAKHGNRSVSSKSGSADALEALGAVIELQPEQVASALAHTGIGFMYAPVHHPAMKVVAPVRREMGVRTIFNILGPLTNPAGSPNILMGVFHPDLVGIQARVLQELGAERALVVWGRDGMDELSLGAGTLVGELRDGQVREYEVHPEDFGIAMSASRNLKVADAAQSRAMLLQVLDNVPGPALDIVALNAGAALYVAGVADSIADGVLRARAVIADGSARARLDAYVVYTRQLAVQP.

Residues Gly84, 87–88, Thr92, 94–97, 112–120, and Ser124 contribute to the 5-phospho-alpha-D-ribose 1-diphosphate site; these read GD, NIST, and KHGNRSVSS. Gly84 is a binding site for anthranilate. Ser96 contacts Mg(2+). Position 115 (Asn115) interacts with anthranilate. Arg170 provides a ligand contact to anthranilate. Positions 229 and 230 each coordinate Mg(2+).

The protein belongs to the anthranilate phosphoribosyltransferase family. In terms of assembly, homodimer. Mg(2+) serves as cofactor.

It carries out the reaction N-(5-phospho-beta-D-ribosyl)anthranilate + diphosphate = 5-phospho-alpha-D-ribose 1-diphosphate + anthranilate. Its pathway is amino-acid biosynthesis; L-tryptophan biosynthesis; L-tryptophan from chorismate: step 2/5. Functionally, catalyzes the transfer of the phosphoribosyl group of 5-phosphorylribose-1-pyrophosphate (PRPP) to anthranilate to yield N-(5'-phosphoribosyl)-anthranilate (PRA). The protein is Anthranilate phosphoribosyltransferase of Xanthomonas axonopodis pv. citri (strain 306).